Here is a 437-residue protein sequence, read N- to C-terminus: Serine carboxypeptidase-like 9 (437 aa).

A signal peptide spans 1–21 (MSLILKFMLLILLVSSHHVRS). Asparagine 101 carries an N-linked (GlcNAc...) asparagine glycan. The active site involves serine 175. Disulfide bonds link cysteine 243-cysteine 257 and cysteine 281-cysteine 293. Asparagine 307 and asparagine 346 each carry an N-linked (GlcNAc...) asparagine glycan. The active site involves aspartate 362. N-linked (GlcNAc...) asparagine glycosylation occurs at asparagine 378. The active site involves histidine 415.

Belongs to the peptidase S10 family. Expressed in seedlings, leaves, flowers and siliques.

It is found in the secreted. The catalysed reaction is 2 1-O-(trans-sinapoyl)-beta-D-glucose = 1,2-di-O-sinapoyl beta-D-glucose + D-glucose. Functionally, catalyzes the formation of 1,2-bis-O-sinapoyl beta-D-glucoside and an unidentified compound 1. This Arabidopsis thaliana (Mouse-ear cress) protein is Serine carboxypeptidase-like 9 (SCPL9).